Here is a 663-residue protein sequence, read N- to C-terminus: Bicarbonate transport ATP-binding protein CmpC (663 aa).

Residues 5 to 239 enclose the ABC transporter domain; the sequence is VAVENIEKSF…RPRKRMDVVH (235 aa). 42–49 lines the ATP pocket; that stretch reads GHSGCGKS. Residues 281–663 are cmpA-like; that stretch reads LEIGYVPLMA…LDQPRPIAAA (383 aa).

This sequence belongs to the ABC transporter superfamily. Nitrate/nitrite/cyanate uptake transporter (NitT) (TC 3.A.1.16) family. In terms of assembly, the complex is composed of two ATP-binding proteins (CmpC and CmpD), a transmembrane protein (CmpB) and a solute-binding protein (CmpA).

The protein localises to the cell inner membrane. Its function is as follows. Part of the ABC transporter complex CmpABCD involved in bicarbonate transport. Responsible for energy coupling to the transport system. The chain is Bicarbonate transport ATP-binding protein CmpC (cmpC) from Synechococcus elongatus (strain ATCC 33912 / PCC 7942 / FACHB-805) (Anacystis nidulans R2).